The following is a 290-amino-acid chain: Membrane protein insertase YidC 1 (290 aa).

The N-terminal stretch at 1-19 (MKKKALLPLFLGIMIFLAG) is a signal peptide. Residue C20 is the site of N-palmitoyl cysteine attachment. The S-diacylglycerol cysteine moiety is linked to residue C20. The next 5 helical transmembrane spans lie at 56–76 (FGLA…PFML), 134–154 (MLGC…YFVL), 176–196 (PDIW…VVSS), 211–231 (MVIS…ALGL), and 232–252 (YWSV…IYYS). The segment at 270–290 (HNPYSKKKGKNTQVVSKKNKK) is disordered. Polar residues predominate over residues 280-290 (NTQVVSKKNKK).

This sequence belongs to the OXA1/ALB3/YidC family. Type 2 subfamily.

The protein localises to the cell membrane. Required for the insertion and/or proper folding and/or complex formation of integral membrane proteins into the membrane. Involved in integration of membrane proteins that insert both dependently and independently of the Sec translocase complex, as well as at least some lipoproteins. The polypeptide is Membrane protein insertase YidC 1 (Staphylococcus epidermidis (strain ATCC 12228 / FDA PCI 1200)).